Reading from the N-terminus, the 348-residue chain is D-alanine--D-alanine ligase (348 aa).

In terms of domain architecture, ATP-grasp spans 132–334 (KRVLESAGIA…YPDLIEKLVA (203 aa)). ATP is bound at residue 162–217 (EEKLSYPVFTKPSNMGSSVGISKSDNQEELRASLDLAFKYDSRVLVEQGVTAREIE). Residues aspartate 288, glutamate 301, and asparagine 303 each contribute to the Mg(2+) site.

The protein belongs to the D-alanine--D-alanine ligase family. The cofactor is Mg(2+). Mn(2+) serves as cofactor.

It is found in the cytoplasm. The catalysed reaction is 2 D-alanine + ATP = D-alanyl-D-alanine + ADP + phosphate + H(+). It participates in cell wall biogenesis; peptidoglycan biosynthesis. Functionally, cell wall formation. The chain is D-alanine--D-alanine ligase from Streptococcus gordonii (strain Challis / ATCC 35105 / BCRC 15272 / CH1 / DL1 / V288).